Reading from the N-terminus, the 1416-residue chain is Non-structural polyprotein 1AB (1416 aa).

Residues 104–146 adopt a coiled-coil conformation; that stretch reads KLIHKANALQERLRLSQEEKATLTLDVQFLQHENVRLKELISK. 5 consecutive transmembrane segments (helical) span residues 154-174, 239-259, 286-306, 313-333, and 344-364; these read MKWIIVGAVLTFLSLIPGGYA, VFYYIHYYEMWNIFMFVLAIG, VLPTIPFHTTMTLWVMNTLMV, LLAITMAILAPILGIIFLCFM, and GLIATAVLIAGGHACLTLTGT. Active-site charge relay system; for serine protease activity residues include H461, D489, and S551. The stretch at 587–614 forms a coiled coil; it reads VKAPSQVELLKEEIERLKAQLNSAAENP. Y693 carries the O-(5'-phospho-RNA)-tyrosine modification. The disordered stretch occupies residues 752 to 815; it reads NFDQAKPTPA…DPQPYSQTYG (64 aa). Basic and acidic residues predominate over residues 783 to 795; it reads SQKKDKQLEHEQQ. A compositionally biased stretch (polar residues) spans 805–814; that stretch reads NDPQPYSQTY. The RdRp catalytic domain maps to 1161–1287; the sequence is KYFIEFDWTR…TTPSVPENYE (127 aa).

The protein belongs to the astroviridae polyprotein 1AB family. As to quaternary structure, monomer. Post-translationally, cleaved by the viral and host proteases. The protease is probably autocatalytically cleaved.

Its subcellular location is the host membrane. It carries out the reaction RNA(n) + a ribonucleoside 5'-triphosphate = RNA(n+1) + diphosphate. Its function is as follows. Responsible for the cleavage of the polyprotein into functional products. Functionally, protein covalently attached to the 5' extremity of the genomic and subgenomic RNAs. It may serve as a primer for the replicase. The polypeptide is Non-structural polyprotein 1AB (ORF1) (Homo sapiens (Human)).